Reading from the N-terminus, the 108-residue chain is uncharacterized protein (108 aa).

The disordered stretch occupies residues 74-108 (TGSKKRDSKANSRSRPSGTITSRGARIGLQGYKSH). The span at 84–95 (NSRSRPSGTITS) shows a compositional bias: polar residues.

This is an uncharacterized protein from Saccharomyces cerevisiae (strain ATCC 204508 / S288c) (Baker's yeast).